The sequence spans 221 residues: Sigma non-opioid intracellular receptor 1 (221 aa).

The Lumenal portion of the chain corresponds to 1–4 (MALW). Residues 5-27 (RGLRAVLAVAGLAVAVQLLRGWL) form a helical membrane-spanning segment. Residues 28–221 (GSKSYVFNRE…STHLSELGFF (194 aa)) are Cytoplasmic-facing. An important for ligand-binding region spans residues 96-103 (SLTEYVLL). Residues 174–221 (FIPSTLGFALADTIFSTQDFLTLFYTVKVYGKALLLETSTHLSELGFF) form a C-terminal hydrophobic region region.

This sequence belongs to the ERG2 family. Homotrimer.

It is found in the nucleus inner membrane. It localises to the nucleus outer membrane. The protein resides in the nucleus envelope. Its subcellular location is the cytoplasmic vesicle. The protein localises to the endoplasmic reticulum membrane. It is found in the membrane. May function in lipid transport from the endoplasmic reticulum and be involved in a wide array of cellular functions probably through regulation of the biogenesis of lipid microdomains at the plasma membrane. May regulate calcium efflux at the endoplasmic reticulum. The polypeptide is Sigma non-opioid intracellular receptor 1 (sigmar1) (Xenopus tropicalis (Western clawed frog)).